Consider the following 329-residue polypeptide: uncharacterized protein (329 aa).

2 consecutive transmembrane segments (helical) span residues 13–35 (IPVLIISLITLVASAYALYWATI) and 229–248 (VIPAALCTVSIIFAGLSVVY).

The protein resides in the cell membrane. This is an uncharacterized protein from Archaeoglobus fulgidus (strain ATCC 49558 / DSM 4304 / JCM 9628 / NBRC 100126 / VC-16).